The primary structure comprises 306 residues: Pantothenate kinase (306 aa).

Residue 91–98 participates in ATP binding; sequence GSVAVGKS.

This sequence belongs to the prokaryotic pantothenate kinase family.

Its subcellular location is the cytoplasm. The enzyme catalyses (R)-pantothenate + ATP = (R)-4'-phosphopantothenate + ADP + H(+). It functions in the pathway cofactor biosynthesis; coenzyme A biosynthesis; CoA from (R)-pantothenate: step 1/5. The sequence is that of Pantothenate kinase from Streptococcus thermophilus (strain CNRZ 1066).